A 258-amino-acid chain; its full sequence is Probable pectin methylesterase CGR3 (258 aa).

Over 1-29 the chain is Cytoplasmic; that stretch reads MSRRQVRRVGDSGSFPFVGALHSKSRSSP. Residues 30 to 50 form a helical membrane-spanning segment; sequence LLSVCLVLVGACLLIGYAYSG. At 51–258 the chain is on the lumenal side; sequence PGMFKSIREV…CQVFHLKPLH (208 aa). A glycan (N-linked (GlcNAc...) asparagine) is linked at Asn171.

This sequence belongs to the class I-like SAM-binding methyltransferase superfamily.

The protein localises to the golgi apparatus membrane. In terms of biological role, together with CGR2, required for homogalacturonan pectins (HG) methylesterification in the Golgi apparatus prior to integration into cell walls, essential for general growth and development. Promotes petiole elongation. Impacts photosynthesis and respiration efficiency by influencing leaf mesophyll morphology and physiology; pectin methylesterification modulates both expansion and positioning of cells in leaves, probably by changing cell walls plasticity. This is Probable pectin methylesterase CGR3 from Arabidopsis thaliana (Mouse-ear cress).